The chain runs to 92 residues: Defensin-like protein 249 (92 aa).

An N-terminal signal peptide occupies residues 1-24 (MKLAAIFLASSVLLSLLPIHLSQG). Disulfide bonds link Cys-34–Cys-91, Cys-45–Cys-74, Cys-53–Cys-84, and Cys-72–Cys-86.

This sequence belongs to the DEFL family.

It is found in the secreted. This is Defensin-like protein 249 (SCRL7) from Arabidopsis thaliana (Mouse-ear cress).